The sequence spans 49 residues: Large ribosomal subunit protein bL33 (49 aa).

This sequence belongs to the bacterial ribosomal protein bL33 family.

The sequence is that of Large ribosomal subunit protein bL33 from Heliobacterium modesticaldum (strain ATCC 51547 / Ice1).